Reading from the N-terminus, the 307-residue chain is Protein rep (307 aa).

Tyr-219 contacts DNA.

It belongs to the Gram-positive plasmids replication protein type 1 family.

This is Protein rep (repA) from Bacillus sp.